We begin with the raw amino-acid sequence, 369 residues long: 4-hydroxyproline betaine 2-epimerase (369 aa).

Substrate-binding residues include Tyr-56 and Gln-162. Catalysis depends on Lys-164, which acts as the Proton donor/acceptor. Mg(2+) contacts are provided by Asp-194, Glu-219, and Asp-242. Catalysis depends on Lys-266, which acts as the Proton donor/acceptor. Ala-295 serves as a coordination point for substrate.

It belongs to the mandelate racemase/muconate lactonizing enzyme family. The cofactor is Mg(2+).

The enzyme catalyses trans-4-hydroxy-L-proline betaine = cis-4-hydroxy-D-proline betaine. It carries out the reaction L-proline betaine = D-proline betaine. Its function is as follows. Catalyzes the 2-epimerization of trans-4-hydroxy-L-proline betaine (tHyp-B) to cis-4-hydroxy-D-proline betaine (cHyp-B). Is involved in a catabolic pathway that degrades tHyp-B to alpha-ketoglutarate. This pathway would permit the utilization of tHyp-B as a carbon and nitrogen source in the absence of osmotic stress, since tHyp-B functions as an osmolyte and is not catabolized when it is needed as osmoprotectant. Can also catalyze the racemization of L-proline betaine. This Paracoccus denitrificans (strain Pd 1222) protein is 4-hydroxyproline betaine 2-epimerase (hpbD).